The following is a 289-amino-acid chain: tRNA dimethylallyltransferase (289 aa).

9-16 contacts ATP; it reads GTTASGKT. 11 to 16 provides a ligand contact to substrate; that stretch reads TASGKT. Residues 34–37 form an interaction with substrate tRNA region; the sequence is DSLC.

This sequence belongs to the IPP transferase family. Monomer. It depends on Mg(2+) as a cofactor.

The catalysed reaction is adenosine(37) in tRNA + dimethylallyl diphosphate = N(6)-dimethylallyladenosine(37) in tRNA + diphosphate. Its function is as follows. Catalyzes the transfer of a dimethylallyl group onto the adenine at position 37 in tRNAs that read codons beginning with uridine, leading to the formation of N6-(dimethylallyl)adenosine (i(6)A). This chain is tRNA dimethylallyltransferase, found in Campylobacter jejuni subsp. doylei (strain ATCC BAA-1458 / RM4099 / 269.97).